Reading from the N-terminus, the 335-residue chain is Holliday junction branch migration complex subunit RuvB (335 aa).

The tract at residues 4-184 is large ATPase domain (RuvB-L); it reads ADRIISGQAK…FGIVQRLEFY (181 aa). ATP is bound by residues isoleucine 23, arginine 24, glycine 65, lysine 68, threonine 69, threonine 70, 131–133, arginine 174, tyrosine 184, and arginine 221; that span reads EDY. Threonine 69 lines the Mg(2+) pocket. A small ATPAse domain (RuvB-S) region spans residues 185–255; that stretch reads SVEDLTSIVA…VAKQALSMLD (71 aa). The segment at 258-335 is head domain (RuvB-H); sequence DAGFDYLDRK…RHFGLQKLSD (78 aa). DNA-binding residues include arginine 294, arginine 313, and arginine 318.

Belongs to the RuvB family. Homohexamer. Forms an RuvA(8)-RuvB(12)-Holliday junction (HJ) complex. HJ DNA is sandwiched between 2 RuvA tetramers; dsDNA enters through RuvA and exits via RuvB. An RuvB hexamer assembles on each DNA strand where it exits the tetramer. Each RuvB hexamer is contacted by two RuvA subunits (via domain III) on 2 adjacent RuvB subunits; this complex drives branch migration. In the full resolvosome a probable DNA-RuvA(4)-RuvB(12)-RuvC(2) complex forms which resolves the HJ.

Its subcellular location is the cytoplasm. The catalysed reaction is ATP + H2O = ADP + phosphate + H(+). Functionally, the RuvA-RuvB-RuvC complex processes Holliday junction (HJ) DNA during genetic recombination and DNA repair, while the RuvA-RuvB complex plays an important role in the rescue of blocked DNA replication forks via replication fork reversal (RFR). RuvA specifically binds to HJ cruciform DNA, conferring on it an open structure. The RuvB hexamer acts as an ATP-dependent pump, pulling dsDNA into and through the RuvAB complex. RuvB forms 2 homohexamers on either side of HJ DNA bound by 1 or 2 RuvA tetramers; 4 subunits per hexamer contact DNA at a time. Coordinated motions by a converter formed by DNA-disengaged RuvB subunits stimulates ATP hydrolysis and nucleotide exchange. Immobilization of the converter enables RuvB to convert the ATP-contained energy into a lever motion, pulling 2 nucleotides of DNA out of the RuvA tetramer per ATP hydrolyzed, thus driving DNA branch migration. The RuvB motors rotate together with the DNA substrate, which together with the progressing nucleotide cycle form the mechanistic basis for DNA recombination by continuous HJ branch migration. Branch migration allows RuvC to scan DNA until it finds its consensus sequence, where it cleaves and resolves cruciform DNA. This is Holliday junction branch migration complex subunit RuvB from Haemophilus influenzae (strain 86-028NP).